A 209-amino-acid chain; its full sequence is Uridine kinase (209 aa).

12–19 (GGSGSGKT) provides a ligand contact to ATP.

Belongs to the uridine kinase family.

It localises to the cytoplasm. The enzyme catalyses uridine + ATP = UMP + ADP + H(+). It catalyses the reaction cytidine + ATP = CMP + ADP + H(+). The protein operates within pyrimidine metabolism; CTP biosynthesis via salvage pathway; CTP from cytidine: step 1/3. It functions in the pathway pyrimidine metabolism; UMP biosynthesis via salvage pathway; UMP from uridine: step 1/1. This chain is Uridine kinase, found in Listeria welshimeri serovar 6b (strain ATCC 35897 / DSM 20650 / CCUG 15529 / CIP 8149 / NCTC 11857 / SLCC 5334 / V8).